The following is a 23-amino-acid chain: NADP phosphatase 2 (23 aa).

In terms of assembly, homodimer.

Its subcellular location is the cytoplasm. This Arthrobacter sp. (strain KM) protein is NADP phosphatase 2.